A 908-amino-acid chain; its full sequence is DNA polymerase I (908 aa).

Positions 1-318 (MKELYLIDAL…DDINTIDTEN (318 aa)) constitute a 5'-3' exonuclease domain. The 3'-5' exonuclease domain occupies 319 to 531 (VKYRSITTKI…MEENGIYLDK (213 aa)). Residues 532–908 (EYLKEYGKEL…ETGKSWGEIH (377 aa)) form a polymerase region.

Belongs to the DNA polymerase type-A family.

It carries out the reaction DNA(n) + a 2'-deoxyribonucleoside 5'-triphosphate = DNA(n+1) + diphosphate. In terms of biological role, in addition to polymerase activity, this DNA polymerase exhibits 3'-5' and 5'-3' exonuclease activity. This chain is DNA polymerase I (polA), found in Borreliella burgdorferi (strain ATCC 35210 / DSM 4680 / CIP 102532 / B31) (Borrelia burgdorferi).